The following is a 766-amino-acid chain: BMP/retinoic acid-inducible neural-specific protein 3 (766 aa).

Positions Met1–Ala33 are cleaved as a signal peptide. Residues Arg74–Ala264 enclose the MACPF domain. Residues Asn168, Asn337, Asn456, Asn562, Asn609, and Asn641 are each glycosylated (N-linked (GlcNAc...) asparagine).

This sequence belongs to the BRINP family. As to expression, expressed in the brain. Weakly expressed in embryonic stem (ES) cells. Expressed in ES-derived neural stem cells (NSCs) and neuronal cells.

It localises to the secreted. The protein resides in the mitochondrion. Its function is as follows. Inhibits neuronal cell proliferation by negative regulation of the cell cycle transition. Promotes pituitary gonadotrope cell proliferation, migration and invasion, when overexpressed. May play a role in cell pituitary tumor development. The polypeptide is BMP/retinoic acid-inducible neural-specific protein 3 (Brinp3) (Mus musculus (Mouse)).